A 290-amino-acid chain; its full sequence is Ventral anterior homeobox 2 (290 aa).

Positions 1–17 (MGDGGAERDRGPARRAE) are enriched in basic and acidic residues. The tract at residues 1–75 (MGDGGAERDR…GQPGPGEADH (75 aa)) is disordered. Positions 102–161 (PKRTRTSFTAEQLYRLEMEFQRCQYVVGRERTELARQLNLSETQVKVWFQNRRTKQKKDQ) form a DNA-binding region, homeobox. Positions 205–240 (PSLPGLPASHRGTSLGDPRNSSPRLNPLSSASASPP) are disordered. The segment covering 222–238 (PRNSSPRLNPLSSASAS) has biased composition (low complexity).

The protein belongs to the EMX homeobox family.

It is found in the nucleus. Transcription factor that may function in dorsoventral specification of the forebrain. Regulates the expression of Wnt signaling antagonists including the expression of a truncated TCF7L2 isoform that cannot bind CTNNB1 and acts therefore as a potent dominant-negative Wnt antagonist. Plays a crucial role in eye development and, in particular, in the specification of the ventral optic vesicle. May be a regulator of axial polarization in the retina. The polypeptide is Ventral anterior homeobox 2 (VAX2) (Homo sapiens (Human)).